Reading from the N-terminus, the 359-residue chain is Alpha-N-acetylneuraminide alpha-2,8-sialyltransferase (359 aa).

Topologically, residues 1 to 28 (MWGRWRGAGGRRGVAQPVIPQMKLLGGR) are cytoplasmic. Residues 29–49 (VPLGASALGLLIVCWFYIFPG) traverse the membrane as a helical; Signal-anchor for type II membrane protein segment. Topologically, residues 50 to 359 (GERLPGHKEM…KKDVSSKKPH (310 aa)) are lumenal. N-linked (GlcNAc...) asparagine glycans are attached at residues Asn-73 and Asn-121. 2 disulfide bridges follow: Cys-140/Cys-289 and Cys-154/Cys-349. Residues Asn-145 and Asn-168 each coordinate CMP-N-acetyl-beta-neuraminate. Asn-247 carries N-linked (GlcNAc...) asparagine glycosylation. CMP-N-acetyl-beta-neuraminate contacts are provided by Ser-276, Thr-277, Gly-278, Trp-298, and His-312. The Proton donor/acceptor role is filled by His-324.

It belongs to the glycosyltransferase 29 family. As to expression, expressed in the dorsal blastopore lip and in the presumptive neuroectoderm in stage 11 embryos. During gastrulation, strongly expressed in the involuting mesoderm. At stages 13 and 16, expressed in the neural plate and neural fold, paraxial mesoderm and notochord. At stages 19 and 22 (neural tube and early tailbud), strongly expressed in the neural tube and notochord. At the tadpole stage, expressed in the head region, branchial arches and otic and optic primordia. Also localized in the notochord and weakly expressed in the somites. In adults, expressed in the brain and ovary. Isoform 2 (short) is expressed at a low level in the adult testis and muscle, and at a high level in the skin. Isoform 1 (long) is expressed at a high level in the adult lung and kidney. Both isoforms 1 and 2 are expressed in the gut and liver.

It localises to the golgi apparatus membrane. The enzyme catalyses an N-acetyl-alpha-neuraminyl-(2-&gt;3)-beta-D-galactosyl derivative + CMP-N-acetyl-beta-neuraminate = an N-acetyl-alpha-neuraminyl-(2-&gt;8)-N-acetyl-alpha-neuraminyl-(2-&gt;3)-beta-D-galactosyl derivative + CMP + H(+). It carries out the reaction a ganglioside GM3 (d18:1(4E)) + CMP-N-acetyl-beta-neuraminate = a ganglioside GD3 (d18:1(4E)) + CMP + H(+). The catalysed reaction is a ganglioside GD3 (d18:1(4E)) + CMP-N-acetyl-beta-neuraminate = a ganglioside GT3 (d18:1(4E)) + CMP + H(+). It catalyses the reaction a ganglioside GD1a (d18:1(4E)) + CMP-N-acetyl-beta-neuraminate = a ganglioside GT1a (d18:1(4E)) + CMP + H(+). The enzyme catalyses a ganglioside GT1b (d18:1(4E)) + CMP-N-acetyl-beta-neuraminate = a ganglioside GQ1b (d18:1(4E)) + CMP + H(+). It carries out the reaction a ganglioside GM1b (d18:1(4E)) + CMP-N-acetyl-beta-neuraminate = a ganglioside GD1c (d18:1(4E)) + CMP + H(+). The catalysed reaction is a ganglioside GD3 + CMP-N-acetyl-beta-neuraminate = a ganglioside GT3 + CMP + H(+). It catalyses the reaction [alpha-N-acetylneuraminyl-(2-&gt;8)](n)-alpha-N-acetylneuraminyl-(2-&gt;8)-alpha-N-acetylneuraminyl-(2-&gt;3)-beta-D-galactosyl-(1-&gt;4)-beta-D-glucosyl-(1&lt;-&gt;1)-ceramide + CMP-N-acetyl-beta-neuraminate = [alpha-N-acetylneuraminyl-(2-&gt;8)](n+1)-alpha-N-acetylneuraminyl-(2-&gt;8)-alpha-N-acetylneuraminyl-(2-&gt;3)-beta-D-galactosyl-(1-&gt;4)-beta-D-glucosyl-(1&lt;-&gt;1)-ceramide + CMP + H(+). It participates in protein modification; protein glycosylation. Its pathway is lipid metabolism; sphingolipid metabolism. Catalyzes the addition of sialic acid in alpha 2,8-linkage to the sialic acid moiety of the ganglioside GM3 to form ganglioside GD3; gangliosides are a subfamily of complex glycosphingolipds that contain one or more residues of sialic acid. Glycosphingolipids are required for convergence extension movements during early development. Can catalyze the addition of a second alpha-2,8- sialic acid to GD3 to form GT3. Can use GM1b, GD1a and GT1b as acceptor substrates to synthesize GD1c, GT1a and GQ1b respectively. In Xenopus laevis (African clawed frog), this protein is Alpha-N-acetylneuraminide alpha-2,8-sialyltransferase.